Reading from the N-terminus, the 369-residue chain is Probable trehalose-phosphate phosphatase I (369 aa).

Belongs to the trehalose phosphatase family. A divalent metal cation serves as cofactor.

It catalyses the reaction alpha,alpha-trehalose 6-phosphate + H2O = alpha,alpha-trehalose + phosphate. It participates in glycan biosynthesis; trehalose biosynthesis. Its function is as follows. Removes the phosphate from trehalose 6-phosphate to produce free trehalose. Trehalose accumulation in plant may improve abiotic stress tolerance. The chain is Probable trehalose-phosphate phosphatase I (TPPI) from Arabidopsis thaliana (Mouse-ear cress).